Here is a 353-residue protein sequence, read N- to C-terminus: Spermidine/putrescine import ATP-binding protein PotA (353 aa).

In terms of domain architecture, ABC transporter spans 7-237 (IRFERVTKEY…PINRFVADFI (231 aa)). An ATP-binding site is contributed by 39–46 (GPSGCGKT).

The protein belongs to the ABC transporter superfamily. Spermidine/putrescine importer (TC 3.A.1.11.1) family. The complex is composed of two ATP-binding proteins (PotA), two transmembrane proteins (PotB and PotC) and a solute-binding protein (PotD).

It is found in the cell membrane. The enzyme catalyses ATP + H2O + polyamine-[polyamine-binding protein]Side 1 = ADP + phosphate + polyamineSide 2 + [polyamine-binding protein]Side 1.. Part of the ABC transporter complex PotABCD involved in spermidine/putrescine import. Responsible for energy coupling to the transport system. This chain is Spermidine/putrescine import ATP-binding protein PotA, found in Geobacillus kaustophilus (strain HTA426).